Here is a 433-residue protein sequence, read N- to C-terminus: MSKIVKVIAREIIDSRGNPTVEAEVHLEGGFVGMAAAPSGASTGSREALELRDGDKARFLGKGVLKAVGAVNGPIAAALLGKDAQDQAAIDQIMIDLDGTENKSNFGANAILAVSLANAKAAAAAKGLPLYAHIAELNGTPGVYSMPLPMMNIINGGEHADNNVDIQEFMIQPVGAKTLKEAVRMGAEVFHNLAKVLKSKGYNTAVGDEGGFAPNLKSNAEALEVIAEAVAAAGYVLGKDVTLAMDCAASEFYDAEKKEYNLKGEGRIFTSNGFSDFLEDLTTKFPIVSIEDGLDESDWEGFAYQTQKLGKKIQIVGDDLFVTNTKILKRGIDNGIANSILIKFNQIGSLTETLAAIKMAKDAGYTAVISHRSGETEDATIADLAVGTAAGQIKTGSMSRSDRVAKYNQLIRIEEALGAKAPFNGLKEVKGQA.

(2R)-2-phosphoglycerate is bound at residue glutamine 167. Glutamate 209 (proton donor) is an active-site residue. Positions 246, 291, and 318 each coordinate Mg(2+). Residues lysine 343, arginine 372, serine 373, and lysine 394 each coordinate (2R)-2-phosphoglycerate. The active-site Proton acceptor is the lysine 343.

It belongs to the enolase family. Component of the RNA degradosome, a multiprotein complex involved in RNA processing and mRNA degradation. Mg(2+) serves as cofactor.

It localises to the cytoplasm. Its subcellular location is the secreted. The protein localises to the cell surface. It carries out the reaction (2R)-2-phosphoglycerate = phosphoenolpyruvate + H2O. It functions in the pathway carbohydrate degradation; glycolysis; pyruvate from D-glyceraldehyde 3-phosphate: step 4/5. Catalyzes the reversible conversion of 2-phosphoglycerate (2-PG) into phosphoenolpyruvate (PEP). It is essential for the degradation of carbohydrates via glycolysis. In Tolumonas auensis (strain DSM 9187 / NBRC 110442 / TA 4), this protein is Enolase.